A 369-amino-acid chain; its full sequence is 2-aminoethylphosphonate--pyruvate transaminase (369 aa).

Residue K193 is modified to N6-(pyridoxal phosphate)lysine.

It belongs to the class-V pyridoxal-phosphate-dependent aminotransferase family. PhnW subfamily. As to quaternary structure, homodimer. Pyridoxal 5'-phosphate is required as a cofactor.

The enzyme catalyses (2-aminoethyl)phosphonate + pyruvate = phosphonoacetaldehyde + L-alanine. Its function is as follows. Involved in phosphonate degradation. This chain is 2-aminoethylphosphonate--pyruvate transaminase, found in Burkholderia pseudomallei (strain K96243).